A 388-amino-acid chain; its full sequence is Protochlorophyllide reductase A, chloroplastic (388 aa).

The transit peptide at 1–74 directs the protein to the chloroplast; sequence MALQLLPSTL…KPSGKKTLRQ (74 aa).

Belongs to the short-chain dehydrogenases/reductases (SDR) family. POR subfamily.

It localises to the plastid. It is found in the chloroplast. The enzyme catalyses chlorophyllide a + NADP(+) = protochlorophyllide a + NADPH + H(+). It participates in porphyrin-containing compound metabolism; chlorophyll biosynthesis. Its function is as follows. Phototransformation of protochlorophyllide (Pchlide) to chlorophyllide (Chlide). The chain is Protochlorophyllide reductase A, chloroplastic (PORA) from Triticum aestivum (Wheat).